A 509-amino-acid chain; its full sequence is H/ACA ribonucleoprotein complex subunit DKC1 (509 aa).

The disordered stretch occupies residues 1–24 (MADAEVITFPKKHKKKKDRKPLQE). Ala2 is modified (N-acetylalanine). Residues 2-21 (ADAEVITFPKKHKKKKDRKP) form a nucleolar localization region. Residues 10 to 19 (PKKHKKKKDR) are compositionally biased toward basic residues. Glycyl lysine isopeptide (Lys-Gly) (interchain with G-Cter in SUMO2) cross-links involve residues Lys20, Lys39, and Lys43. Residue Asp125 is the Nucleophile of the active site. Residue Lys191 forms a Glycyl lysine isopeptide (Lys-Gly) (interchain with G-Cter in SUMO2) linkage. Residues 297-372 (KRLVMKDSAV…VAKIKRVIME (76 aa)) enclose the PUA domain. Ser387 is subject to Phosphoserine. A Glycyl lysine isopeptide (Lys-Gly) (interchain with G-Cter in SUMO2) cross-link involves residue Lys394. Residue Lys413 forms a Glycyl lysine isopeptide (Lys-Gly) (interchain with G-Cter in SUMO1); alternate linkage. Residue Lys413 forms a Glycyl lysine isopeptide (Lys-Gly) (interchain with G-Cter in SUMO2); alternate linkage. Residue Lys424 forms a Glycyl lysine isopeptide (Lys-Gly) (interchain with G-Cter in SUMO2) linkage. The nuclear and nucleolar localization stretch occupies residues 446–509 (KRKRDSESES…KVKVVEEMSE (64 aa)). The segment at 447–509 (RKRDSESESD…KVKVVEEMSE (63 aa)) is disordered. Ser451, Ser453, and Ser455 each carry phosphoserine. Thr458 bears the Phosphothreonine mark. Basic residues predominate over residues 466–476 (EKKKKKDKKPK). The residue at position 481 (Ser481) is a Phosphoserine. Thr485 is modified (phosphothreonine). The residue at position 508 (Ser508) is a Phosphoserine.

This sequence belongs to the pseudouridine synthase TruB family. Part of the H/ACA small nucleolar ribonucleoprotein (H/ACA snoRNP) complex, which contains NHP2/NOLA2, GAR1/NOLA1, NOP10/NOLA3, and DKC1/NOLA4, which is presumed to be the catalytic subunit. The complex contains a stable core formed by binding of one or two NOP10-DKC1 heterodimers to NHP2; GAR1 subsequently binds to this core via DKC1. The complex binds a box H/ACA small nucleolar RNA (snoRNA), which may target the specific site of modification within the RNA substrate. During assembly, the complex contains NAF1 instead of GAR1/NOLA1. The complex also interacts with TERC, which contains a 3'-terminal domain related to the box H/ACA snoRNAs. Specific interactions with snoRNAs or TERC are mediated by GAR1 and NHP2. Associates with NOLC1/NOPP140. H/ACA snoRNPs interact with the SMN complex, consisting of SMN1 or SMN2, GEMIN2/SIP1, DDX20/GEMIN3, and GEMIN4. This is mediated by interaction between GAR1 and SMN1 or SMN2. The SMN complex may be required for correct assembly of the H/ACA snoRNP complex. Component of the telomerase holoenzyme complex composed of one molecule of TERT, one molecule of WRAP53/TCAB1, two molecules of H/ACA ribonucleoprotein complex subunits DKC1, NOP10, NHP2 and GAR1, and a telomerase RNA template component (TERC). The telomerase holoenzyme complex is associated with TEP1, SMG6/EST1A and POT1. Interacts with SHQ1; this interaction may lead to the stabilization of DKC1, from the time of its synthesis until its association with NOP10, NHP2, and NAF1 at the nascent H/ACA RNA. Interacts with HMBOX1. Interacts with DHX36. In terms of tissue distribution, ubiquitously expressed, with elevated levels in Purkinje cells, the olfactory bulb, and Leydig cells of the testis.

It is found in the nucleus. It localises to the nucleolus. Its subcellular location is the cajal body. It catalyses the reaction uridine in 5S rRNA = pseudouridine in 5S rRNA. Catalytic subunit of H/ACA small nucleolar ribonucleoprotein (H/ACA snoRNP) complex, which catalyzes pseudouridylation of rRNA. This involves the isomerization of uridine such that the ribose is subsequently attached to C5, instead of the normal N1. Each rRNA can contain up to 100 pseudouridine ('psi') residues, which may serve to stabilize the conformation of rRNAs. Required for ribosome biogenesis and telomere maintenance. Also required for correct processing or intranuclear trafficking of TERC, the RNA component of the telomerase reverse transcriptase (TERT) holoenzyme. The sequence is that of H/ACA ribonucleoprotein complex subunit DKC1 (Dkc1) from Mus musculus (Mouse).